The sequence spans 217 residues: Octanoyltransferase (217 aa).

The BPL/LPL catalytic domain occupies 31–206; that stretch reads KSVMDEAWLL…ELVSRLGYAE (176 aa). Substrate-binding positions include 70 to 77, 137 to 139, and 150 to 152; these read RGGQVTYH, SLG, and GLA. C168 acts as the Acyl-thioester intermediate in catalysis.

The protein belongs to the LipB family.

It localises to the cytoplasm. It catalyses the reaction octanoyl-[ACP] + L-lysyl-[protein] = N(6)-octanoyl-L-lysyl-[protein] + holo-[ACP] + H(+). The protein operates within protein modification; protein lipoylation via endogenous pathway; protein N(6)-(lipoyl)lysine from octanoyl-[acyl-carrier-protein]: step 1/2. Functionally, catalyzes the transfer of endogenously produced octanoic acid from octanoyl-acyl-carrier-protein onto the lipoyl domains of lipoate-dependent enzymes. Lipoyl-ACP can also act as a substrate although octanoyl-ACP is likely to be the physiological substrate. This chain is Octanoyltransferase, found in Pseudomonas aeruginosa (strain UCBPP-PA14).